Reading from the N-terminus, the 130-residue chain is Glycoprotein hormone alpha-2 (130 aa).

Positions 1-22 are cleaved as a signal peptide; that stretch reads MPMAPRVLLFCLLGLAVTEGHG. Disulfide bonds link cysteine 32/cysteine 90, cysteine 49/cysteine 104, cysteine 58/cysteine 120, and cysteine 62/cysteine 122. 2 N-linked (GlcNAc...) asparagine glycosylation sites follow: asparagine 38 and asparagine 82.

Belongs to the glycoprotein hormones subunit alpha family. As to quaternary structure, heterodimer with GPHB5; this heterodimer interacts with thyroid-stimulating hormone receptor (TSHR), and hence stimulates cAMP production.

It localises to the secreted. In terms of biological role, functions as a heterodimeric glycoprotein hormone with GPHB5 able to bind and activate the thyroid-stimulating hormone receptor (TSHR), leading to increased cAMP production. Plays a central role in controlling thyroid cell metabolism. This Rattus norvegicus (Rat) protein is Glycoprotein hormone alpha-2 (Gpha2).